Reading from the N-terminus, the 103-residue chain is MAAQQKIRIKLKSYDHSLVDKWALRIIDVVKQTDAIIFGPIPLPTKAHVYTVNRSPHVDKKSREQFSFSSHKRLIEIINPTSRTIDMLMKLELPSGVDVEIKS.

The protein belongs to the universal ribosomal protein uS10 family. In terms of assembly, part of the 30S ribosomal subunit.

Functionally, involved in the binding of tRNA to the ribosomes. This is Small ribosomal subunit protein uS10 from Chlorobium phaeobacteroides (strain DSM 266 / SMG 266 / 2430).